The sequence spans 226 residues: Phosphate propanoyltransferase (226 aa).

44 to 46 is a binding site for CoA; sequence VSN. Zn(2+) is bound by residues His-48 and His-50. Met-72, Lys-90, and Arg-97 together coordinate CoA. Arg-103 provides a ligand contact to phosphate. Glu-109 lines the Zn(2+) pocket. Phe-116 is a CoA binding site. Residues His-157, His-159, and His-204 each contribute to the Zn(2+) site. Residue Asn-211 coordinates CoA.

This sequence belongs to the PduL family. In terms of assembly, full-length protein forms large oligomers. Homodimer, when purified in the absence of the encapsulation peptide (EP, residues 1-47). The EP may influence oligomerization. The cofactor is Zn(2+).

It is found in the bacterial microcompartment. The catalysed reaction is propanoyl-CoA + phosphate = propanoyl phosphate + CoA. The protein operates within polyol metabolism; 1,2-propanediol degradation. In terms of biological role, involved in 1,2-propanediol (1,2-PD) utilization within the bacterial microcompartment (BMC) dedicated to 1,2-PD degradation by catalyzing the conversion of propanoyl-CoA to propanoyl-phosphate. CoA is regenerated within the pdu BMC (for use by PduP) via this enzyme, although there must also be cofactor transport across the BMC. Directly targeted to the BMC. Phosphate is probably the first substrate to bind in the forward direction. CoA is probably the first substrate to bind in the reverse direction, and might bind to the enzyme as the BMC assembles, ensuring cofactor encapsulation. The chain is Phosphate propanoyltransferase from Rhodopseudomonas palustris (strain BisB18).